The chain runs to 271 residues: MKLFGLIGEKLGHSLSPEIHNKVFKDNNIDGLYNLFSVKKDFENNIVESLKCLGVKGANVTIPYKEKVMDQLDIISHEAKVIGAVNTILIKDGKSYGYNTDYYGFGKMLERAKVNIEGNSFFVLGAGGAARSILKYLEDSKAKKIVLVSRDKEKAFKKFKDFNINFMSYGELEEINEEFALINTTPCGMYPNTNSVAVSEKVIKKFKVAVDIVYNPLETKFLKMAKDNGLKTVDGLFMLVGQGVKAEEIWNGIKVDKSTEEEIYEELKCRF.

Shikimate contacts are provided by residues 14 to 16 and Thr61; that span reads SLS. Lys65 serves as the catalytic Proton acceptor. The shikimate site is built by Asn86 and Asp101. Residues 125-129 and Ile212 contribute to the NADP(+) site; that span reads GAGGA. Residue Tyr214 coordinates shikimate. Residue Gly235 participates in NADP(+) binding.

The protein belongs to the shikimate dehydrogenase family. In terms of assembly, homodimer.

The enzyme catalyses shikimate + NADP(+) = 3-dehydroshikimate + NADPH + H(+). Its pathway is metabolic intermediate biosynthesis; chorismate biosynthesis; chorismate from D-erythrose 4-phosphate and phosphoenolpyruvate: step 4/7. Involved in the biosynthesis of the chorismate, which leads to the biosynthesis of aromatic amino acids. Catalyzes the reversible NADPH linked reduction of 3-dehydroshikimate (DHSA) to yield shikimate (SA). The polypeptide is Shikimate dehydrogenase (NADP(+)) (Clostridium perfringens (strain 13 / Type A)).